A 218-amino-acid chain; its full sequence is Kynurenine formamidase (218 aa).

Substrate is bound at residue Trp27. His57, His61, and Asp63 together coordinate Zn(2+). Residue His67 is the Proton donor/acceptor of the active site. Residues His169 and Glu181 each coordinate Zn(2+).

It belongs to the Cyclase 1 superfamily. KynB family. In terms of assembly, homodimer. Requires Zn(2+) as cofactor.

The enzyme catalyses N-formyl-L-kynurenine + H2O = L-kynurenine + formate + H(+). It participates in amino-acid degradation; L-tryptophan degradation via kynurenine pathway; L-kynurenine from L-tryptophan: step 2/2. Inhibited by EDTA. Insensitive to phenylmethylsulfonyl fluoride (PMSF). Functionally, catalyzes the hydrolysis of N-formyl-L-kynurenine to L-kynurenine, the second step in the kynurenine pathway of tryptophan degradation. This is Kynurenine formamidase from Cupriavidus metallidurans (strain ATCC 43123 / DSM 2839 / NBRC 102507 / CH34) (Ralstonia metallidurans).